The following is a 337-amino-acid chain: Glyceraldehyde-3-phosphate dehydrogenase 3, cytosolic (337 aa).

NAD(+)-binding positions include 13–14 (RI), aspartate 35, and arginine 82. D-glyceraldehyde 3-phosphate contacts are provided by residues 153–155 (SCT), threonine 184, 213–214 (TG), and arginine 236. Cysteine 154 serves as the catalytic Nucleophile. Asparagine 318 contacts NAD(+).

Belongs to the glyceraldehyde-3-phosphate dehydrogenase family. As to quaternary structure, homotetramer.

It localises to the cytoplasm. The enzyme catalyses D-glyceraldehyde 3-phosphate + phosphate + NAD(+) = (2R)-3-phospho-glyceroyl phosphate + NADH + H(+). The protein operates within carbohydrate degradation; glycolysis; pyruvate from D-glyceraldehyde 3-phosphate: step 1/5. In terms of biological role, key enzyme in glycolysis that catalyzes the first step of the pathway by converting D-glyceraldehyde 3-phosphate (G3P) into 3-phospho-D-glyceroyl phosphate. Essential for the maintenance of cellular ATP levels and carbohydrate metabolism. The polypeptide is Glyceraldehyde-3-phosphate dehydrogenase 3, cytosolic (GAPC3) (Oryza sativa subsp. japonica (Rice)).